Here is a 430-residue protein sequence, read N- to C-terminus: Flavin-dependent monooxygenase eupH (430 aa).

FAD is bound by residues 11–14, 33–34, Q43, R107, Y282, and D306; these read AGIG and ER.

The protein belongs to the aromatic-ring hydroxylase family. It depends on FAD as a cofactor.

It participates in secondary metabolite biosynthesis; terpenoid biosynthesis. Functionally, flavin-dependent monooxygenase; part of the gene cluster that mediates the biosynthesis of eupenifeldin, a bistropolone meroterpenoid that acts as an antitumor agent. The first step of eupenifeldin biosynthesis is the biosynthesis of 3-methylorcinaldehyde performed by the non-reducing polyketide synthase eupA. Oxidative dearomatization of 3-methylorcinaldehyde likely catalyzed by the FAD-dependent monooxygenase eupB is followed by oxidative ring expansion by the 2-oxoglutarate-dependent dioxygenase eupC to provide the first tropolone metabolite, tropolone stipitaldehyde. In parallel, generation of sesquiterpene alpha-humulene from farnesylpyrophosphate (FPP) is catalyzed by the terpene cyclase eupE. The cytochrome P450 monooxygenase eupD then hydroxylates humulene to humulenol. The putative Diels-Alderase eupF probably catalyzes the formation of the tropolone-humulene skeleton by linking humulenol and the polyketide moiety. The short-chain dehydrogenase/reductase eupG and the flavin-dependent monooxygenase eupH are also essential for eupenifeldin biosynthesis and are likely the additional decorating enzymes of the tropolone-humulene skeleton to produce final eupenifeldin or derivatives. This Phoma sp protein is Flavin-dependent monooxygenase eupH.